The following is a 192-amino-acid chain: Shikimate kinase (192 aa).

Position 27–32 (27–32) interacts with ATP; it reads GTGKTT. Residue Thr-31 participates in Mg(2+) binding. 3 residues coordinate substrate: Asp-49, Arg-73, and Gly-95. ATP is bound at residue Arg-133. Arg-152 contacts substrate.

Belongs to the shikimate kinase family. Monomer. Mg(2+) is required as a cofactor.

The protein localises to the cytoplasm. It catalyses the reaction shikimate + ATP = 3-phosphoshikimate + ADP + H(+). It functions in the pathway metabolic intermediate biosynthesis; chorismate biosynthesis; chorismate from D-erythrose 4-phosphate and phosphoenolpyruvate: step 5/7. In terms of biological role, catalyzes the specific phosphorylation of the 3-hydroxyl group of shikimic acid using ATP as a cosubstrate. The chain is Shikimate kinase from Hahella chejuensis (strain KCTC 2396).